Here is a 187-residue protein sequence, read N- to C-terminus: Transmembrane protein 212 (187 aa).

A run of 5 helical transmembrane segments spans residues 11–31, 42–62, 76–96, 106–126, and 148–168; these read TLVTLGGLSIFSGAIAFFPVF, VWIACPIWNGALAVTAGSLVL, AVFTFVILSILGCPLHFTVAL, FYSFSGVAGTNYLGYVVTFPF, and LQVLDLCLSLILFCVSLAVFI.

It is found in the membrane. In Mus musculus (Mouse), this protein is Transmembrane protein 212 (Tmem212).